The chain runs to 49 residues: Large ribosomal subunit protein bL36 (49 aa).

Belongs to the bacterial ribosomal protein bL36 family.

In Delftia acidovorans (strain DSM 14801 / SPH-1), this protein is Large ribosomal subunit protein bL36.